A 367-amino-acid chain; its full sequence is Pyrimidine monooxygenase RutA (367 aa).

Residues 49-50, asparagine 115, glutamate 124, 140-141, and serine 190 contribute to the FMN site; these read IK and RY.

This sequence belongs to the NtaA/SnaA/DszA monooxygenase family. RutA subfamily.

The catalysed reaction is uracil + FMNH2 + NADH + O2 = (Z)-3-ureidoacrylate + FMN + NAD(+) + H2O + H(+). It catalyses the reaction thymine + FMNH2 + NADH + O2 = (Z)-2-methylureidoacrylate + FMN + NAD(+) + H2O + H(+). Functionally, catalyzes the pyrimidine ring opening between N-3 and C-4 by an unusual flavin hydroperoxide-catalyzed mechanism, adding oxygen atoms in the process to yield ureidoacrylate peracid, that immediately reacts with FMN forming ureidoacrylate and FMN-N(5)-oxide. The FMN-N(5)-oxide reacts spontaneously with NADH to produce FMN. Requires the flavin reductase RutF to regenerate FMN in vivo. The chain is Pyrimidine monooxygenase RutA from Yersinia enterocolitica serotype O:8 / biotype 1B (strain NCTC 13174 / 8081).